The sequence spans 274 residues: Diaminopimelate epimerase (274 aa).

Positions 11, 44, and 64 each coordinate substrate. The active-site Proton donor is Cys-73. Residues 74–75 (GN), Asn-157, Asn-190, and 208–209 (ER) each bind substrate. Catalysis depends on Cys-217, which acts as the Proton acceptor. 218–219 (GS) serves as a coordination point for substrate.

It belongs to the diaminopimelate epimerase family. Homodimer.

Its subcellular location is the cytoplasm. The enzyme catalyses (2S,6S)-2,6-diaminopimelate = meso-2,6-diaminopimelate. It participates in amino-acid biosynthesis; L-lysine biosynthesis via DAP pathway; DL-2,6-diaminopimelate from LL-2,6-diaminopimelate: step 1/1. In terms of biological role, catalyzes the stereoinversion of LL-2,6-diaminopimelate (L,L-DAP) to meso-diaminopimelate (meso-DAP), a precursor of L-lysine and an essential component of the bacterial peptidoglycan. The chain is Diaminopimelate epimerase from Escherichia coli O127:H6 (strain E2348/69 / EPEC).